A 109-amino-acid polypeptide reads, in one-letter code: Spermidine export protein MdtI (109 aa).

The next 4 helical transmembrane spans lie at Trp-6 to Leu-26, Cys-36 to Val-56, Ala-64 to Phe-84, and Leu-88 to Phe-108.

It belongs to the drug/metabolite transporter (DMT) superfamily. Small multidrug resistance (SMR) (TC 2.A.7.1) family. MdtI subfamily. As to quaternary structure, forms a complex with MdtJ.

The protein localises to the cell inner membrane. Functionally, catalyzes the excretion of spermidine. This is Spermidine export protein MdtI from Salmonella paratyphi A (strain ATCC 9150 / SARB42).